The following is a 577-amino-acid chain: 5'-AMP-activated protein kinase subunit gamma (577 aa).

The tract at residues Gln45–Asn226 is disordered. A compositionally biased stretch (low complexity) spans Asn58–Asn88. Composition is skewed to polar residues over residues Ser106 to Gly121 and Glu138 to Met155. Positions Ser165 to Asn226 are enriched in low complexity. CBS domains follow at residues Val279–Lys341, Glu364–Glu426, Ile438–Ser499, and Gln517–Ser574.

This sequence belongs to the 5'-AMP-activated protein kinase gamma subunit family.

Functionally, AMPK may be responsible for the regulation of fatty acid synthesis by phosphorylation of acetyl-CoA carboxylase. This is 5'-AMP-activated protein kinase subunit gamma (prkag) from Dictyostelium discoideum (Social amoeba).